The following is a 274-amino-acid chain: NAD kinase (274 aa).

Aspartate 59 functions as the Proton acceptor in the catalytic mechanism. NAD(+) contacts are provided by residues 59 to 60, 133 to 134, arginine 144, aspartate 163, 174 to 179, and glutamine 233; these read DG, ND, and TAYALS.

This sequence belongs to the NAD kinase family. It depends on a divalent metal cation as a cofactor.

It localises to the cytoplasm. The enzyme catalyses NAD(+) + ATP = ADP + NADP(+) + H(+). Involved in the regulation of the intracellular balance of NAD and NADP, and is a key enzyme in the biosynthesis of NADP. Catalyzes specifically the phosphorylation on 2'-hydroxyl of the adenosine moiety of NAD to yield NADP. The polypeptide is NAD kinase (Aquifex aeolicus (strain VF5)).